The chain runs to 398 residues: Phospholipase C (398 aa).

The N-terminal stretch at 1–28 (MKRKICKALICAALATSLWAGASTKVYA) is a signal peptide. Positions 29, 39, 84, 96, 154, 158, 164, 176, and 180 each coordinate Zn(2+). Residues 29 to 278 (WDGKIDGTGT…HDVSEGNDPS (250 aa)) form the Zn-dependent PLC domain. A linker region spans residues 275-283 (NDPSVGKNV). Residues 284 to 398 (KELVAYISTS…ISGNSTYNIK (115 aa)) enclose the PLAT domain. The Ca(2+) site is built by Asp-297, Gly-299, Thr-300, Asp-301, Asp-321, Asn-322, Gly-324, Asn-325, Asp-326, Asp-364, and Ala-365.

Belongs to the bacterial zinc-metallophospholipase C family. It depends on Ca(2+) as a cofactor. Requires Zn(2+) as cofactor.

It localises to the secreted. It carries out the reaction a 1,2-diacyl-sn-glycero-3-phosphocholine + H2O = phosphocholine + a 1,2-diacyl-sn-glycerol + H(+). Bacterial hemolysins are exotoxins that attack blood cell membranes and cause cell rupture. Constitutes an essential virulence factor in gas gangrene. Binds to eukaryotic membranes where it hydrolyzes both phosphatidylcholine and sphingomyelin. The diacylglycerol produced can activate both the arachidonic acid pathway, leading to modulation of the inflammatory response cascade and thrombosis, and protein kinase C, leading to activation of eukaryotic phospholipases and further membrane damage. Acts on human and mouse erythrocytes, but not on rabbit or horse erythrocytes. This Clostridium perfringens (strain ATCC 13124 / DSM 756 / JCM 1290 / NCIMB 6125 / NCTC 8237 / Type A) protein is Phospholipase C (plc).